Consider the following 206-residue polypeptide: MSKTRRMVLIAMLAALSTILLLPILQFPLLPGIDFMKVELSIIPVLIGVFTLGLGDGFIILFIRSVLWYLLFNQGPSTWIGVPMNFVALGIFMAIVWFFTKKKFSIKNYTVGIVLATIASVLVMMVLNVFYALPLYRLAAGFDVDKIFAGATHLFNMGSLSVTLNPTYLLTVVLPFNALQYIIFALVFGLIVTVFKKNKVVKFYNA.

The next 6 helical transmembrane spans lie at 7 to 27, 42 to 62, 79 to 99, 113 to 133, 147 to 169, and 173 to 195; these read MVLIAMLAALSTILLLPILQF, IIPVLIGVFTLGLGDGFIILF, WIGVPMNFVALGIFMAIVWFF, IVLATIASVLVMMVLNVFYAL, IFAGATHLFNMGSLSVTLNPTYL, and VLPFNALQYIIFALVFGLIVTVF.

It belongs to the prokaryotic riboflavin transporter (P-RFT) (TC 2.A.87) family. As to quaternary structure, in E.coli forms a stable energy-coupling factor (ECF) transporter complex composed of 2 membrane-embedded substrate-binding protein (S component), 2 ATP-binding proteins (A and A' components) and 2 transmembrane proteins (T component), probably with a stoichiometry of 2:1:1:2. May be able to interact with more than 1 S component at a time.

The protein resides in the cell membrane. Mediates riboflavin uptake, may also transport FMN and roseoflavin. Probably a riboflavin-binding protein that interacts with the energy-coupling factor (ECF) ABC-transporter complex. Unlike classic ABC transporters this ECF transporter provides the energy necessary to transport a number of different substrates. The substrates themselves are bound by transmembrane, not extracytoplasmic soluble proteins. Uptake of riboflavin into proteosomes containing EcfA1A2T and RibU has been demonstrated. Uptake requires hydrolyzable Mg-ATP. The sequence is that of Riboflavin transporter RibU (ribU) from Lactococcus lactis subsp. cremoris (strain MG1363).